The chain runs to 231 residues: MPQLTKKQKAMQGKVDSTRLYAFTDALVLVKQAATAKFDESIDVAVQLGIDAKKSDQVVRGAVVLPNGTGKITRVAVFAQGAKAEEAKAAGADVVGMDDLAAMVKAGDMPFDVVIAAPDAMRVVGTLGQILGPRGLMPNPKVGTVTPDVALAVKNAKAGQVQFRANKAGIVHSTIGRRSFDDAKLQGNLAALIDALNKTKPASSKGQYLRKLALSSTMGVGVRVDTQSITV.

It belongs to the universal ribosomal protein uL1 family. Part of the 50S ribosomal subunit.

Binds directly to 23S rRNA. The L1 stalk is quite mobile in the ribosome, and is involved in E site tRNA release. Functionally, protein L1 is also a translational repressor protein, it controls the translation of the L11 operon by binding to its mRNA. The protein is Large ribosomal subunit protein uL1 of Verminephrobacter eiseniae (strain EF01-2).